The sequence spans 338 residues: Holliday junction branch migration complex subunit RuvB (338 aa).

The segment at 4–187 is large ATPase domain (RuvB-L); sequence ADKDRLVSGD…FGISEHMAYY (184 aa). Residues Leu-26, Arg-27, Gly-68, Lys-71, Thr-72, Thr-73, 134-136, Arg-177, Tyr-187, and Arg-224 each bind ATP; that span reads EDF. Position 72 (Thr-72) interacts with Mg(2+). Residues 188–258 are small ATPAse domain (RuvB-S); that stretch reads SADDLSEIVK…MVDHALDQLQ (71 aa). A head domain (RuvB-H) region spans residues 261–338; the sequence is QQGLDQIDRK…AHMGMSAEQH (78 aa). Arg-316 and Arg-321 together coordinate DNA.

This sequence belongs to the RuvB family. Homohexamer. Forms an RuvA(8)-RuvB(12)-Holliday junction (HJ) complex. HJ DNA is sandwiched between 2 RuvA tetramers; dsDNA enters through RuvA and exits via RuvB. An RuvB hexamer assembles on each DNA strand where it exits the tetramer. Each RuvB hexamer is contacted by two RuvA subunits (via domain III) on 2 adjacent RuvB subunits; this complex drives branch migration. In the full resolvosome a probable DNA-RuvA(4)-RuvB(12)-RuvC(2) complex forms which resolves the HJ.

The protein resides in the cytoplasm. It carries out the reaction ATP + H2O = ADP + phosphate + H(+). Its function is as follows. The RuvA-RuvB-RuvC complex processes Holliday junction (HJ) DNA during genetic recombination and DNA repair, while the RuvA-RuvB complex plays an important role in the rescue of blocked DNA replication forks via replication fork reversal (RFR). RuvA specifically binds to HJ cruciform DNA, conferring on it an open structure. The RuvB hexamer acts as an ATP-dependent pump, pulling dsDNA into and through the RuvAB complex. RuvB forms 2 homohexamers on either side of HJ DNA bound by 1 or 2 RuvA tetramers; 4 subunits per hexamer contact DNA at a time. Coordinated motions by a converter formed by DNA-disengaged RuvB subunits stimulates ATP hydrolysis and nucleotide exchange. Immobilization of the converter enables RuvB to convert the ATP-contained energy into a lever motion, pulling 2 nucleotides of DNA out of the RuvA tetramer per ATP hydrolyzed, thus driving DNA branch migration. The RuvB motors rotate together with the DNA substrate, which together with the progressing nucleotide cycle form the mechanistic basis for DNA recombination by continuous HJ branch migration. Branch migration allows RuvC to scan DNA until it finds its consensus sequence, where it cleaves and resolves cruciform DNA. The sequence is that of Holliday junction branch migration complex subunit RuvB from Lacticaseibacillus paracasei (strain ATCC 334 / BCRC 17002 / CCUG 31169 / CIP 107868 / KCTC 3260 / NRRL B-441) (Lactobacillus paracasei).